The following is a 445-amino-acid chain: MAGEGDQQDAAHNMGNHLPLLPADSEDEDDEIEMEVEDQDSKEARKPNIINFDTSLPTSHTYLGADMEEFHGRTLHDDDSCQVIPVLPEVLMILIPGQTLPLQLSHPQEVSMVRNLIQKDRTFAVLAYSNVQEREAQFGTTAEIYAYREEQEFGIEVVKVKAIGRQRFKVLELRTQSDGIQQAKVQILPECVLPSTMSAVQLESLNKCQVFPSKPISWEDQYSCKWWQKYQKRKFHCANLTSWPRWLYSLYDAETLMDRIKKQLREWDENLKDDSLPENPIDFSYRVAACLPIDDVLRIQLLKIGSAIQRLRCELDIMNKCTSLCCKQCQETEITTKNEIFSLSLCGPMAAYVNPHGYVHETLTVYKASNLNLIGRPSTVHSWFPGYAWTIAQCKICASHIGWKFTATKKDMSPQKFWGLTRSALLPTIPETEDEISPDKVILCL.

The disordered stretch occupies residues 1–48; the sequence is MAGEGDQQDAAHNMGNHLPLLPADSEDEDDEIEMEVEDQDSKEARKPN. Over residues 24–38 the composition is skewed to acidic residues; the sequence is DSEDEDDEIEMEVED. Ser25 is modified (phosphoserine). The Lon N-terminal domain maps to 84 to 322; sequence IPVLPEVLMI…CELDIMNKCT (239 aa). The CULT domain maps to 321–429; that stretch reads CTSLCCKQCQ…LTRSALLPTI (109 aa). Zn(2+) contacts are provided by Cys326 and Cys329. 3 residues coordinate (S)-thalidomide: His381, Trp383, and Trp389. Zn(2+) is bound by residues Cys394 and Cys397.

It belongs to the CRBN family. In terms of assembly, component of a DCX (DDB1-CUL4-X-box) protein ligase complex, at least composed of CRBN, CUL4A, DDB1 and RBX1. Interacts directly with DDB1. Interacts with KCNT1. Interacts with ILF2. Interacts with TRAF6 and ECSIT. Ubiquitinated, ubiquitination is mediated by its own DCX protein ligase complex. Highly expressed in brain.

It localises to the cytoplasm. The protein localises to the nucleus. The protein resides in the membrane. It participates in protein modification; protein ubiquitination. Its function is as follows. Substrate recognition component of a DCX (DDB1-CUL4-X-box) E3 protein ligase complex that mediates the ubiquitination and subsequent proteasomal degradation of target proteins, such as MEIS2, ILF2 or GLUL. Normal degradation of key regulatory proteins is required for normal limb outgrowth and expression of the fibroblast growth factor FGF8. Maintains presynaptic glutamate release and consequently, cognitive functions such as memory and learning, by negatively regulating large-conductance calcium-activated potassium (BK) channels in excitatory neurons. Likely to function by regulating the assembly and neuronal surface expression of BK channels via its interaction with KCNT1. May also be involved in regulating anxiety-like behaviors via a BK channel-independent mechanism. Plays a negative role in TLR4 signaling by interacting with TRAF6 and ECSIT, leading to inhibition of ECSIT ubiquitination, an important step of the signaling. The sequence is that of Protein cereblon (Crbn) from Mus musculus (Mouse).